The chain runs to 351 residues: uncharacterized protein (351 aa).

This is an uncharacterized protein from Gallus gallus (Chicken).